A 526-amino-acid chain; its full sequence is Choline/ethanolamine transporter FLVCR2 (526 aa).

The tract at residues 1 to 70 is disordered; that stretch reads MVNEGPNQEE…PSGLAHPSSS (70 aa). At 1–76 the chain is on the cytoplasmic side; it reads MVNEGPNQEE…PSSSGPEDLS (76 aa). 1–84 contacts heme b; it reads MVNEGPNQEE…LSVIKVSRRR (84 aa). Repeat copies occupy residues 25 to 30, 31 to 36, 37 to 42, 43 to 48, and 49 to 54. Low complexity predominate over residues 25–56; sequence PSVSVHPSVSVHPSVSINPSVSVHPSSSAHPS. Positions 25 to 72 are 8 X 6 AA tandem repeats of P-S-[VS]-S-[VIAG]-[HNP]; that stretch reads PSVSVHPSVSVHPSVSINPSVSVHPSSSAHPSALAQPSGLAHPSSSGP. A 6; approximate repeat occupies 55-60; the sequence is PSALAQ. Residues 61–66 form a 7; approximate repeat; that stretch reads PSGLAH. Repeat unit 8 spans residues 67 to 72; sequence PSSSGP. Residues 77–101 traverse the membrane as a helical segment; the sequence is VIKVSRRRWAVVLVFSCYSMCNSFQ. Residues asparagine 98 and tryptophan 102 each contribute to the choline site. The Extracellular portion of the chain corresponds to 102–119; it reads WIQYGSINNIFMHFYGVS. A helical transmembrane segment spans residues 120–147; sequence AFAIDWLSMCYMLTYIPLLLPVAWLLEK. At 148-149 the chain is on the cytoplasmic side; sequence FG. Residues 150 to 169 form a helical membrane-spanning segment; it reads LRTIALTGSALNCLGAWVKL. The Extracellular segment spans residues 170–176; it reads GSLKPHL. A helical membrane pass occupies residues 177–205; that stretch reads FPVTVVGQLICSVAQVFILGMPSRIASVW. Positions 191 and 195 each coordinate choline. Topologically, residues 206–210 are cytoplasmic; sequence FGANE. Residues 211–236 form a helical membrane-spanning segment; that stretch reads VSTACSVAVFGNQLGIAIGFLVPPVL. The Extracellular portion of the chain corresponds to 237–241; it reads VPNIE. A helical transmembrane segment spans residues 242-271; it reads DRDELAYHISIMFYIIGGVATLLLILVIIV. The Cytoplasmic portion of the chain corresponds to 272-307; sequence FKEKPKYPPSRAQSLSYALTSPDASYLGSIARLFKN. The chain crosses the membrane as a helical span at residues 308–338; sequence LNFVLLVITYGLNAGAFYALSTLLNRMVIWH. A choline-binding site is contributed by tyrosine 325. Over 339–342 the chain is Extracellular; sequence YPGE. A helical transmembrane segment spans residues 343 to 371; sequence EVNAGRIGLTIVIAGMLGAVISGIWLDRS. Over 372-373 the chain is Cytoplasmic; it reads KT. A helical transmembrane segment spans residues 374–396; sequence YKETTLVVYIMTLVGMVVYTFTL. The Extracellular portion of the chain corresponds to 397 to 399; that stretch reads NLG. A helical membrane pass occupies residues 400 to 429; it reads HLWVVFITAGTMGFFMTGYLPLGFEFAVEL. At 430 to 437 the chain is on the cytoplasmic side; the sequence is TYPESEGI. The chain crosses the membrane as a helical span at residues 438-463; the sequence is SSGLLNISAQVFGIIFTISQGQIIDN. Glutamine 447 contacts choline. The Extracellular segment spans residues 464–465; it reads YG. Residues 466–488 form a helical membrane-spanning segment; it reads TKPGNIFLCVFLTLGAALTAFIK. Over 489–526 the chain is Cytoplasmic; sequence ADLRRQKANKETLENKLQEEEEESNTSKVPTAVSEDHL. Residues 500 to 526 form a disordered region; sequence TLENKLQEEEEESNTSKVPTAVSEDHL. At serine 515 the chain carries Phosphoserine.

It belongs to the major facilitator superfamily. Feline leukemia virus subgroup C receptor (TC 2.A.1.28.1) family. In terms of assembly, interacts with components of electron transfer chain complexes III, IV and V including CYC1, NDUFA4, COX4I1, ATP5PD and ATP5F1C; these interactions occur in the absence of heme and are disrupted upon heme binding. Interacts with ATP2A2; this interaction occurs in the absence of heme and promotes ATP2A2 proteasomal degradation; the complex is dissociated upon heme binding. Interacts with HMOX1; this interaction is potentiated in the presence of heme. As to expression, expressed in non-hematopoietic tissues, with relative abundant expression in brain, placenta, lung, liver and kidney. Also expressed in hematopoietic tissues (fetal liver, spleen, lymph node, thymus, leukocytes and bone marrow). Found in acidophil cells of the pituitary that secrete growth hormone and prolactin (at protein level).

The protein localises to the cell membrane. It localises to the mitochondrion membrane. It is found in the endoplasmic reticulum membrane. It carries out the reaction choline(out) = choline(in). The enzyme catalyses ethanolamine(in) = ethanolamine(out). It catalyses the reaction heme b(in) = heme b(out). In terms of biological role, choline uniporter that specifically mediates choline uptake at the blood-brain-barrier. Responsible for the majority of choline uptake across the blood-brain-barrier from the circulation into the brain. Choline, a nutrient critical for brain development, is a precursor of phosphatidylcholine, as well as betaine. Also mediates transport of ethanolamine. Choline and ethanolamine transport is not coupled with proton transport and is exclusively driven by the choline gradient across the plasma membrane. However, the presence of an inwardly directed proton gradient enhances choline uptake. Also acts as a heme b transporter. Required to regulate mitochondrial respiration processes, ATP synthesis and thermogenesis. At low heme levels, interacts with components of electron transfer chain (ETC) complexes and ATP2A2, leading to ubiquitin-mediated degradation of ATP2A2 and inhibition of thermogenesis. Upon heme binding, dissociates from ETC complexes to allow switching from mitochondrial ATP synthesis to thermogenesis. This is Choline/ethanolamine transporter FLVCR2 from Homo sapiens (Human).